Here is a 382-residue protein sequence, read N- to C-terminus: Myb-like transcription factor (382 aa).

Myb-like domains lie at 1–57 (MPRS…RWSK), 58–108 (ITGA…QHCL), and 109–160 (DPSL…ITLF). Residues 194 to 210 (MSMDASEDGDDAEDDQT) are compositionally biased toward acidic residues. A disordered region spans residues 194–240 (MSMDASEDGDDAEDDQTPDSYTSISTSSFDDILGGSSSSPSAADTMT). The span at 211–240 (PDSYTSISTSSFDDILGGSSSSPSAADTMT) shows a compositional bias: polar residues.

The protein localises to the nucleus. Functionally, transcription factor; part of the gene cluster that mediates the biosynthesis of 1233A, a natural compound known as an inhibitor of HMG-CoA synthase in the mevalonate pathway and with antibacterial and antifungal activities. Involved in hygromycin B-induced transcriptional control of the cluster. This is Myb-like transcription factor from Fusarium sp.